The sequence spans 126 residues: Protein C10 (126 aa).

Ala-2 carries the N-acetylalanine modification.

Belongs to the UPF0456 family. As to expression, ubiquitously expressed, with higher expression in lung.

It localises to the cytoplasm. In brain, may be required for corpus callosum development. This Mus musculus (Mouse) protein is Protein C10 (Grcc10).